We begin with the raw amino-acid sequence, 185 residues long: Translation initiation factor IF-3 (185 aa).

This sequence belongs to the IF-3 family. As to quaternary structure, monomer.

It is found in the cytoplasm. Its function is as follows. IF-3 binds to the 30S ribosomal subunit and shifts the equilibrium between 70S ribosomes and their 50S and 30S subunits in favor of the free subunits, thus enhancing the availability of 30S subunits on which protein synthesis initiation begins. The polypeptide is Translation initiation factor IF-3 (Bacteroides thetaiotaomicron (strain ATCC 29148 / DSM 2079 / JCM 5827 / CCUG 10774 / NCTC 10582 / VPI-5482 / E50)).